Consider the following 150-residue polypeptide: uncharacterized protein (150 aa).

It belongs to the OsmC/Ohr family.

This is an uncharacterized protein from Bacillus subtilis (strain 168).